Consider the following 687-residue polypeptide: Chloride channel protein ClC-Kb (687 aa).

Topologically, residues Met1–Trp50 are cytoplasmic. The next 2 helical transmembrane spans lie at Tyr51–Tyr82 and Leu91–Ser111. Residues Pro116 to Lys127 constitute an intramembrane region (helical). Residue Ser121 coordinates chloride. The next 2 helical transmembrane spans lie at Ile141–Thr160 and Leu161–Leu180. The N-linked (GlcNAc...) asparagine glycan is linked to Asn193. Positions Ala203–Ile224 form an intramembrane region, helical. Residues Tyr236–Val255 traverse the membrane as a helical segment. Glu259, Glu261, Asp278, and Glu281 together coordinate Ca(2+). 2 helical membrane passes run Ile282–Ile310 and Pro325–Pro342. Residues Ala349–Ser360 constitute an intramembrane region (helical). Helical transmembrane passes span Gly400–Pro420 and Met421–Phe440. Phe426 lines the chloride pocket. Positions Gly464–Val496 form an intramembrane region, helical. The helical transmembrane segment at Pro500–Tyr520 threads the bilayer. At Asp521–Lys687 the chain is on the cytoplasmic side. CBS domains lie at Met551–Ser609 and Cys626–Pro684.

Belongs to the chloride channel (TC 2.A.49) family. CLCNKB subfamily. In terms of assembly, homodimer. Interacts with BSND. N-glycosylated.

The protein resides in the basolateral cell membrane. The enzyme catalyses chloride(in) = chloride(out). It catalyses the reaction iodide(out) = iodide(in). It carries out the reaction nitrate(in) = nitrate(out). The catalysed reaction is bromide(in) = bromide(out). With respect to regulation, activated by extracellular Ca(2+) and inhibited by extracellular acidic pH. In terms of biological role, anion-selective channel permeable to small monovalent anions with ion selectivity for chloride &gt; bromide &gt; nitrate &gt; iodide. Forms a homodimeric channel where each subunit has its own ion conduction pathway. May conduct double-barreled currents controlled by two types of gates, two fast gates that control each subunit independently and a slow common gate that opens and shuts off both subunits simultaneously. Assembles with the regulatory subunit BSND/Barttin for sorting at the basolateral plasma membrane domain and functional switch to the ion conducting state. CLCNKB:BSND channels display mostly a linear current-voltage relationship controlled by common gate. Mediates chloride conductance along nephron segments, namely the thick ascending limb of Henle's loop, convoluted tubule and the collecting duct, contributing to the maintenance of systemic acid-base and electrolyte homeostasis. Conducts chloride currents in the stria vascularis of the inner ear to establish the endocochlear potential necessary for normal hearing. This Homo sapiens (Human) protein is Chloride channel protein ClC-Kb.